The sequence spans 585 residues: A-type ATP synthase subunit A (585 aa).

231–238 is an ATP binding site; sequence GPFGSGKT.

The protein belongs to the ATPase alpha/beta chains family. As to quaternary structure, has multiple subunits with at least A(3), B(3), C, D, E, F, H, I and proteolipid K(x).

The protein localises to the cell membrane. It catalyses the reaction ATP + H2O + 4 H(+)(in) = ADP + phosphate + 5 H(+)(out). Component of the A-type ATP synthase that produces ATP from ADP in the presence of a proton gradient across the membrane. The A chain is the catalytic subunit. In Thermococcus sibiricus (strain DSM 12597 / MM 739), this protein is A-type ATP synthase subunit A.